A 305-amino-acid polypeptide reads, in one-letter code: Translation initiation factor eIF2B subunit alpha (305 aa).

Lysine 35 is subject to N6-acetyllysine.

This sequence belongs to the eIF-2B alpha/beta/delta subunits family. In terms of assembly, component of the translation initiation factor 2B (eIF2B) complex which is a heterodecamer of two sets of five different subunits: alpha, beta, gamma, delta and epsilon. Subunits alpha, beta and delta comprise a regulatory subcomplex and subunits epsilon and gamma comprise a catalytic subcomplex. Within the complex, the hexameric regulatory complex resides at the center, with the two heterodimeric catalytic subcomplexes bound on opposite sides.

The protein localises to the cytoplasm. Its subcellular location is the cytosol. With respect to regulation, activated by the chemical integrated stress response (ISR) inhibitor ISRIB which stimulates guanine nucleotide exchange factor activity for both phosphorylated and unphosphorylated eIF2. Acts as a component of the translation initiation factor 2B (eIF2B) complex, which catalyzes the exchange of GDP for GTP on eukaryotic initiation factor 2 (eIF2) gamma subunit. Its guanine nucleotide exchange factor activity is repressed when bound to eIF2 complex phosphorylated on the alpha subunit, thereby limiting the amount of methionyl-initiator methionine tRNA available to the ribosome and consequently global translation is repressed. This chain is Translation initiation factor eIF2B subunit alpha (EIF2B1), found in Pongo abelii (Sumatran orangutan).